We begin with the raw amino-acid sequence, 32 residues long: DNA-binding protein HU (32 aa).

The protein belongs to the bacterial histone-like protein family.

Its function is as follows. Histone-like DNA-binding protein which is capable of wrapping DNA to stabilize it, and thus to prevent its denaturation under extreme environmental conditions. This Synechocystis sp. (strain PCC 6701) protein is DNA-binding protein HU (hup).